Reading from the N-terminus, the 620-residue chain is Membrane protein insertase YidC (620 aa).

A helical membrane pass occupies residues 7-27 (NYLIAIALSVMVVLGWQFFYM). The segment covering 37–58 (AEQAQQAQQAKTPATQATPGAA) has biased composition (low complexity). The tract at residues 37–77 (AEQAQQAQQAKTPATQATPGAAVNGALPGQTQASATTSRED) is disordered. 4 helical membrane-spanning segments follow: residues 399 to 419 (FGVA…PLAS), 469 to 489 (WPLL…YITI), 514 to 534 (LFGL…WPII), and 560 to 580 (WMPL…VIYW).

Belongs to the OXA1/ALB3/YidC family. Type 1 subfamily. Interacts with the Sec translocase complex via SecD. Specifically interacts with transmembrane segments of nascent integral membrane proteins during membrane integration.

Its subcellular location is the cell inner membrane. Functionally, required for the insertion and/or proper folding and/or complex formation of integral membrane proteins into the membrane. Involved in integration of membrane proteins that insert both dependently and independently of the Sec translocase complex, as well as at least some lipoproteins. Aids folding of multispanning membrane proteins. The polypeptide is Membrane protein insertase YidC (Allorhizobium ampelinum (strain ATCC BAA-846 / DSM 112012 / S4) (Agrobacterium vitis (strain S4))).